The chain runs to 336 residues: Dihydroorotate dehydrogenase (quinone) (336 aa).

Residues 62 to 66 (AGLDK) and Thr86 each bind FMN. Lys66 is a binding site for substrate. 111 to 115 (NRMGF) is a binding site for substrate. Asn139 and Asn172 together coordinate FMN. Asn172 serves as a coordination point for substrate. Ser175 acts as the Nucleophile in catalysis. Asn177 serves as a coordination point for substrate. Lys217 and Thr245 together coordinate FMN. 246–247 (NT) contributes to the substrate binding site. FMN contacts are provided by residues Gly268, Gly297, and 318–319 (YS).

It belongs to the dihydroorotate dehydrogenase family. Type 2 subfamily. Monomer. Requires FMN as cofactor.

Its subcellular location is the cell membrane. The enzyme catalyses (S)-dihydroorotate + a quinone = orotate + a quinol. Its pathway is pyrimidine metabolism; UMP biosynthesis via de novo pathway; orotate from (S)-dihydroorotate (quinone route): step 1/1. Its function is as follows. Catalyzes the conversion of dihydroorotate to orotate with quinone as electron acceptor. The sequence is that of Dihydroorotate dehydrogenase (quinone) from Aeromonas salmonicida (strain A449).